A 430-amino-acid chain; its full sequence is Enolase (430 aa).

Glutamine 163 contacts (2R)-2-phosphoglycerate. Glutamate 205 functions as the Proton donor in the catalytic mechanism. 3 residues coordinate Mg(2+): aspartate 242, glutamate 285, and aspartate 312. Positions 337, 366, 367, and 388 each coordinate (2R)-2-phosphoglycerate. Lysine 337 acts as the Proton acceptor in catalysis.

It belongs to the enolase family. Mg(2+) serves as cofactor.

It is found in the cytoplasm. It localises to the secreted. Its subcellular location is the cell surface. The enzyme catalyses (2R)-2-phosphoglycerate = phosphoenolpyruvate + H2O. It functions in the pathway carbohydrate degradation; glycolysis; pyruvate from D-glyceraldehyde 3-phosphate: step 4/5. Catalyzes the reversible conversion of 2-phosphoglycerate (2-PG) into phosphoenolpyruvate (PEP). It is essential for the degradation of carbohydrates via glycolysis. This Maridesulfovibrio salexigens (strain ATCC 14822 / DSM 2638 / NCIMB 8403 / VKM B-1763) (Desulfovibrio salexigens) protein is Enolase.